The following is a 452-amino-acid chain: Na(+)/H(+) antiporter NhaA (452 aa).

11 consecutive transmembrane segments (helical) span residues 23-43 (MMLFLASVLAVIMANSSLSTI), 71-91 (LLQFVNDVLMVIFFLAVGLEI), 108-128 (LPIVGAIGGMIVPVLFFLLVV), 136-156 (GAAIPMSTDIAFALAALAVLG), 165-185 (VFLTALAVADDIGGIIVIALF), 189-209 (HINIGMLAIAFGILFIMYLMG), 216-236 (LGLYFVCTFFVWLFFLQSGIH), 316-336 (IVGYFVLPLFAFANAGITLGG), 349-369 (VFLGLFVGKPLGIYFFTYGFV), 385-405 (LMAVSLFGGIGFTVSLFIATL), and 418-438 (EAKLGIFVASIFAALVGIVTL).

This sequence belongs to the NhaA Na(+)/H(+) (TC 2.A.33) antiporter family.

It is found in the cell inner membrane. It catalyses the reaction Na(+)(in) + 2 H(+)(out) = Na(+)(out) + 2 H(+)(in). Its function is as follows. Na(+)/H(+) antiporter that extrudes sodium in exchange for external protons. In Porphyromonas gingivalis (strain ATCC BAA-308 / W83), this protein is Na(+)/H(+) antiporter NhaA.